The following is a 610-amino-acid chain: Elongation factor 4 (610 aa).

A tr-type G domain is found at 11 to 193 (EKIRNFSIIA…QIVEKVPAPT (183 aa)). Residues 23 to 28 (DHGKST) and 140 to 143 (NKID) contribute to the GTP site.

It belongs to the TRAFAC class translation factor GTPase superfamily. Classic translation factor GTPase family. LepA subfamily.

The protein localises to the cell membrane. The enzyme catalyses GTP + H2O = GDP + phosphate + H(+). Its function is as follows. Required for accurate and efficient protein synthesis under certain stress conditions. May act as a fidelity factor of the translation reaction, by catalyzing a one-codon backward translocation of tRNAs on improperly translocated ribosomes. Back-translocation proceeds from a post-translocation (POST) complex to a pre-translocation (PRE) complex, thus giving elongation factor G a second chance to translocate the tRNAs correctly. Binds to ribosomes in a GTP-dependent manner. This is Elongation factor 4 from Streptococcus pyogenes serotype M3 (strain ATCC BAA-595 / MGAS315).